The chain runs to 301 residues: Cuticle collagen 2 (301 aa).

The first 37 residues, 1-37, serve as a signal peptide directing secretion; that stretch reads MDIDARIKAYKFVAYSAVTFSVVAVVSVFITLPMVYN. Triple-helical region stretches follow at residues 105 to 134, 153 to 176, 183 to 212, and 215 to 282; these read GPPG…PGKG, GPPG…PGSP, GPAG…PGAS, and GGPG…KGIC. A disordered region spans residues 109–284; it reads PGGSPGKPGK…GEGEKGICPK (176 aa). Composition is skewed to pro residues over residues 143 to 170 and 179 to 191; these read TQPP…PGPD and PSGP…PGPA. Over residues 201 to 218 the composition is skewed to gly residues; the sequence is GAPGGPGEPGASEQGGPG. Pro residues predominate over residues 219–229; sequence EPGPAGPPGPA. The segment covering 252-261 has biased composition (low complexity); the sequence is PGAAGAPGAD. A compositionally biased stretch (gly residues) spans 262–274; it reads GNPGGPGTAGKPG.

This sequence belongs to the cuticular collagen family. As to quaternary structure, collagen polypeptide chains are complexed within the cuticle by disulfide bonds and other types of covalent cross-links. In terms of tissue distribution, syncytial dorsal and ventral epidermis.

Its function is as follows. Nematode cuticles are composed largely of collagen-like proteins. The cuticle functions both as an exoskeleton and as a barrier to protect the worm from its environment. The sequence is that of Cuticle collagen 2 (col-2) from Caenorhabditis elegans.